The following is a 247-amino-acid chain: MPRYRLTVEYDGSDYVGWQRQENGPSVQGAIEKAVLSLTGETVSIRGAGRTDSGVHAMGQVAHLDLTREWKTHTLRNALNAHLALAAERVSILDAAEVPPEFDARFSAIRRHYLYRIISRRSPLALEARRAWWVPKTLDHEAMHEAAQHLVGHHDFTTFRSAHCQANSPLRTIDRLDVTRSGELIEIRATAQSFLHNQIRSFAGSLKLVGEGKWTPDDLKTALEARDRKACGPVAPPEGLFFMQVDY.

The active-site Nucleophile is aspartate 52. Tyrosine 113 serves as a coordination point for substrate.

The protein belongs to the tRNA pseudouridine synthase TruA family. In terms of assembly, homodimer.

It carries out the reaction uridine(38/39/40) in tRNA = pseudouridine(38/39/40) in tRNA. Formation of pseudouridine at positions 38, 39 and 40 in the anticodon stem and loop of transfer RNAs. The sequence is that of tRNA pseudouridine synthase A from Sinorhizobium fredii (strain NBRC 101917 / NGR234).